The chain runs to 320 residues: Lipoyl synthase (320 aa).

[4Fe-4S] cluster contacts are provided by Cys67, Cys72, Cys78, Cys93, Cys97, Cys100, and Ser307. Residues 79–296 (FNHGTATFMI…RDKANEMGFE (218 aa)) enclose the Radical SAM core domain.

It belongs to the radical SAM superfamily. Lipoyl synthase family. [4Fe-4S] cluster is required as a cofactor.

It localises to the cytoplasm. The catalysed reaction is [[Fe-S] cluster scaffold protein carrying a second [4Fe-4S](2+) cluster] + N(6)-octanoyl-L-lysyl-[protein] + 2 oxidized [2Fe-2S]-[ferredoxin] + 2 S-adenosyl-L-methionine + 4 H(+) = [[Fe-S] cluster scaffold protein] + N(6)-[(R)-dihydrolipoyl]-L-lysyl-[protein] + 4 Fe(3+) + 2 hydrogen sulfide + 2 5'-deoxyadenosine + 2 L-methionine + 2 reduced [2Fe-2S]-[ferredoxin]. The protein operates within protein modification; protein lipoylation via endogenous pathway; protein N(6)-(lipoyl)lysine from octanoyl-[acyl-carrier-protein]: step 2/2. Its function is as follows. Catalyzes the radical-mediated insertion of two sulfur atoms into the C-6 and C-8 positions of the octanoyl moiety bound to the lipoyl domains of lipoate-dependent enzymes, thereby converting the octanoylated domains into lipoylated derivatives. The chain is Lipoyl synthase from Haemophilus influenzae (strain 86-028NP).